The primary structure comprises 197 residues: uncharacterized protein (197 aa).

The helical transmembrane segment at 103 to 123 (LAIVLPVLANLIMCAMLAWYL) threads the bilayer.

The protein resides in the host membrane. This is an uncharacterized protein from Equus caballus (Horse).